The sequence spans 75 residues: MKSDIHPKYTEVTVVCANCGNSFETRSTRPSIKVDVCSNCHPFYTGKQTLVDTAGRVDRFNKRFAKSTASQAQAK.

Belongs to the bacterial ribosomal protein bL31 family. Type A subfamily. In terms of assembly, part of the 50S ribosomal subunit.

Binds the 23S rRNA. This Chlorobium luteolum (strain DSM 273 / BCRC 81028 / 2530) (Pelodictyon luteolum) protein is Large ribosomal subunit protein bL31.